The sequence spans 66 residues: Large ribosomal subunit protein bL33c (66 aa).

In terms of assembly, component of the chloroplast large ribosomal subunit (LSU). Mature 70S chloroplast ribosomes of higher plants consist of a small (30S) and a large (50S) subunit. The 30S small subunit contains 1 molecule of ribosomal RNA (16S rRNA) and 24 different proteins. The 50S large subunit contains 3 rRNA molecules (23S, 5S and 4.5S rRNA) and 33 different proteins.

The protein localises to the plastid. It localises to the chloroplast. In terms of biological role, component of the chloroplast ribosome (chloro-ribosome), a dedicated translation machinery responsible for the synthesis of chloroplast genome-encoded proteins, including proteins of the transcription and translation machinery and components of the photosynthetic apparatus. This chain is Large ribosomal subunit protein bL33c (rpl33), found in Spinacia oleracea (Spinach).